The following is a 130-amino-acid chain: Small ribosomal subunit protein uS9 (130 aa).

The protein belongs to the universal ribosomal protein uS9 family.

The polypeptide is Small ribosomal subunit protein uS9 (Caldicellulosiruptor saccharolyticus (strain ATCC 43494 / DSM 8903 / Tp8T 6331)).